The chain runs to 78 residues: MSTIEERVKKIVAEQLGVKEDEVTNEKSFVDDLGADSLDTVELVMALEEEFETEIPDEEAEKITTVQAAIDYVNSHKA.

Residues 2 to 77 (STIEERVKKI…AAIDYVNSHK (76 aa)) form the Carrier domain. The residue at position 37 (serine 37) is an O-(pantetheine 4'-phosphoryl)serine.

The protein belongs to the acyl carrier protein (ACP) family. Post-translationally, 4'-phosphopantetheine is transferred from CoA to a specific serine of apo-ACP by AcpS. This modification is essential for activity because fatty acids are bound in thioester linkage to the sulfhydryl of the prosthetic group.

It is found in the cytoplasm. Its pathway is lipid metabolism; fatty acid biosynthesis. Its function is as follows. Carrier of the growing fatty acid chain in fatty acid biosynthesis. This chain is Acyl carrier protein, found in Pseudomonas putida (strain GB-1).